We begin with the raw amino-acid sequence, 396 residues long: Elongation factor Tu (396 aa).

One can recognise a tr-type G domain in the interval 10 to 206 (KPHVNVGTIG…ALDTYIPTPE (197 aa)). The tract at residues 19-26 (GHVDHGKT) is G1. Residue 19-26 (GHVDHGKT) coordinates GTP. Position 26 (threonine 26) interacts with Mg(2+). The tract at residues 60–64 (GITIN) is G2. Residues 81–84 (DCPG) form a G3 region. Residues 81–85 (DCPGH) and 136–139 (NKAD) contribute to the GTP site. A G4 region spans residues 136–139 (NKAD). The tract at residues 174-176 (SAK) is G5.

It belongs to the TRAFAC class translation factor GTPase superfamily. Classic translation factor GTPase family. EF-Tu/EF-1A subfamily. As to quaternary structure, monomer.

The protein localises to the cytoplasm. The enzyme catalyses GTP + H2O = GDP + phosphate + H(+). In terms of biological role, GTP hydrolase that promotes the GTP-dependent binding of aminoacyl-tRNA to the A-site of ribosomes during protein biosynthesis. The chain is Elongation factor Tu from Bordetella avium (strain 197N).